We begin with the raw amino-acid sequence, 438 residues long: Acid phosphatase type 7 (438 aa).

The N-terminal stretch at 1–23 (MSPFLGGWLFFCMLLPFSPGVQG) is a signal peptide. Fe cation contacts are provided by Asp-141, Asp-170, and Tyr-173. Residue Asp-170 coordinates Zn(2+). Asn-205 contributes to the Zn(2+) binding site. Asn-211 carries an N-linked (GlcNAc...) asparagine glycan. Residues His-286 and His-333 each contribute to the Zn(2+) site. His-335 provides a ligand contact to Fe cation. N-linked (GlcNAc...) asparagine glycosylation is found at Asn-350 and Asn-404.

The protein belongs to the metallophosphoesterase superfamily. Purple acid phosphatase family. Requires Fe cation as cofactor. Zn(2+) is required as a cofactor.

The protein localises to the secreted. It catalyses the reaction a phosphate monoester + H2O = an alcohol + phosphate. The sequence is that of Acid phosphatase type 7 from Mus musculus (Mouse).